We begin with the raw amino-acid sequence, 207 residues long: Large ribosomal subunit protein uL4 (207 aa).

The disordered stretch occupies residues 49–78 (HAVKNRSAVSGGGRKPWRQKGTGRARQGSI).

It belongs to the universal ribosomal protein uL4 family. As to quaternary structure, part of the 50S ribosomal subunit.

In terms of biological role, one of the primary rRNA binding proteins, this protein initially binds near the 5'-end of the 23S rRNA. It is important during the early stages of 50S assembly. It makes multiple contacts with different domains of the 23S rRNA in the assembled 50S subunit and ribosome. Functionally, forms part of the polypeptide exit tunnel. The protein is Large ribosomal subunit protein uL4 of Streptococcus thermophilus (strain CNRZ 1066).